The primary structure comprises 95 residues: DNA-directed RNA polymerase subunit Rpo6 (95 aa).

It belongs to the archaeal Rpo6/eukaryotic RPB6 RNA polymerase subunit family. In terms of assembly, part of the 13-subunit RNA polymerase complex.

The protein resides in the cytoplasm. It carries out the reaction RNA(n) + a ribonucleoside 5'-triphosphate = RNA(n+1) + diphosphate. In terms of biological role, DNA-dependent RNA polymerase (RNAP) catalyzes the transcription of DNA into RNA using the four ribonucleoside triphosphates as substrates. The sequence is that of DNA-directed RNA polymerase subunit Rpo6 from Saccharolobus solfataricus (strain ATCC 35092 / DSM 1617 / JCM 11322 / P2) (Sulfolobus solfataricus).